A 123-amino-acid chain; its full sequence is WAP four-disulfide core domain protein 5 (123 aa).

The signal sequence occupies residues 1–24 (MRTQSLLLLGALLAVGSQLPAVFG). 2 consecutive WAP domains span residues 27–74 (KGEK…VPRV) and 75–121 (SVKL…RDPA). Cystine bridges form between Cys-34–Cys-62, Cys-41–Cys-66, Cys-49–Cys-61, Cys-55–Cys-70, Cys-81–Cys-109, Cys-88–Cys-113, Cys-96–Cys-108, and Cys-102–Cys-117.

Its subcellular location is the secreted. Putative acid-stable proteinase inhibitor. In Gorilla gorilla gorilla (Western lowland gorilla), this protein is WAP four-disulfide core domain protein 5 (WFDC5).